A 503-amino-acid chain; its full sequence is Transmembrane protein 184C (503 aa).

7 helical membrane-spanning segments follow: residues 17–37 (LLILLYALAILVTVPVCIWEF), 48–68 (VWFIAGIFLLLTIPVSMCGIL), 83–103 (IIRILWMVPIYSLDSWVALKY), 115–135 (ECYEAYVIYNFMIFLTNYLTI), 212–232 (YLVILNNLSQLFAMYCLLLFY), 254–274 (VVFVSFWQAVLIALLVKVGVI), and 287–307 (AVATGLQDFIICIEMFFAAIA). 2 disordered regions span residues 358-391 (PKKKCFPGDPDHNEHSSLLSASSQDSSKPSSPVG) and 479-503 (SPKPSDDIVIDFSDSPEGSDSSTDS). A compositionally biased stretch (low complexity) spans 373 to 388 (SSLLSASSQDSSKPSS). Residues 494–503 (PEGSDSSTDS) are compositionally biased toward polar residues.

Belongs to the TMEM184 family.

The protein resides in the membrane. In terms of biological role, possible tumor suppressor which may play a role in cell growth. The protein is Transmembrane protein 184C (Tmem184c) of Rattus norvegicus (Rat).